A 444-amino-acid polypeptide reads, in one-letter code: Radical S-adenosyl methionine domain-containing protein 1, mitochondrial (444 aa).

The N-terminal 39 residues, 1-39 (MSTRVLTLTLLKKRHLMQCFWSTVGSVHLRSIASDKIPS), are a transit peptide targeting the mitochondrion. In terms of domain architecture, Radical SAM core spans 40–274 (HAVEASLYVH…CRVLEESGFH (235 aa)). Position 47 (tyrosine 47) interacts with S-adenosyl-L-methionine. [4Fe-4S] cluster contacts are provided by cysteine 53, cysteine 57, and cysteine 60. Residues glycine 102, 103-104 (GT), glutamate 135, glutamine 162, arginine 174, and aspartate 199 each bind S-adenosyl-L-methionine.

Belongs to the anaerobic coproporphyrinogen-III oxidase family. HemW subfamily. It depends on [4Fe-4S] cluster as a cofactor.

It is found in the mitochondrion. Functionally, may be a heme chaperone, appears to bind heme. Homologous bacterial proteins do not have oxygen-independent coproporphyrinogen-III oxidase activity. Binds 1 [4Fe-4S] cluster. The cluster is coordinated with 3 cysteines and an exchangeable S-adenosyl-L-methionine. The sequence is that of Radical S-adenosyl methionine domain-containing protein 1, mitochondrial (rsad1) from Danio rerio (Zebrafish).